We begin with the raw amino-acid sequence, 265 residues long: 4-hydroxy-tetrahydrodipicolinate reductase (265 aa).

NAD(+) is bound by residues Gly7 to Met12 and Asp33. Arg34 contacts NADP(+). Residues Gly96–Thr98 and Ala120–Met123 contribute to the NAD(+) site. His153 functions as the Proton donor/acceptor in the catalytic mechanism. (S)-2,3,4,5-tetrahydrodipicolinate is bound at residue His154. The Proton donor role is filled by Lys157. A (S)-2,3,4,5-tetrahydrodipicolinate-binding site is contributed by Gly163–Thr164.

It belongs to the DapB family.

It localises to the cytoplasm. It catalyses the reaction (S)-2,3,4,5-tetrahydrodipicolinate + NAD(+) + H2O = (2S,4S)-4-hydroxy-2,3,4,5-tetrahydrodipicolinate + NADH + H(+). The catalysed reaction is (S)-2,3,4,5-tetrahydrodipicolinate + NADP(+) + H2O = (2S,4S)-4-hydroxy-2,3,4,5-tetrahydrodipicolinate + NADPH + H(+). It participates in amino-acid biosynthesis; L-lysine biosynthesis via DAP pathway; (S)-tetrahydrodipicolinate from L-aspartate: step 4/4. Catalyzes the conversion of 4-hydroxy-tetrahydrodipicolinate (HTPA) to tetrahydrodipicolinate. The chain is 4-hydroxy-tetrahydrodipicolinate reductase from Burkholderia orbicola (strain MC0-3).